A 145-amino-acid polypeptide reads, in one-letter code: NADH-quinone oxidoreductase subunit A (145 aa).

A run of 3 helical transmembrane segments spans residues 14 to 34 (FAVFLIVSIGLCCLMLAGAWF), 66 to 86 (FYLVAMFFVIFDVEALYLYAW), and 96 to 116 (VGFVEAAIFILVLLAGLFYLV).

The protein belongs to the complex I subunit 3 family. As to quaternary structure, NDH-1 is composed of 13 different subunits. Subunits NuoA, H, J, K, L, M, N constitute the membrane sector of the complex.

It is found in the cell inner membrane. It catalyses the reaction a quinone + NADH + 5 H(+)(in) = a quinol + NAD(+) + 4 H(+)(out). In terms of biological role, NDH-1 shuttles electrons from NADH, via FMN and iron-sulfur (Fe-S) centers, to quinones in the respiratory chain. The immediate electron acceptor for the enzyme in this species is believed to be ubiquinone. Couples the redox reaction to proton translocation (for every two electrons transferred, four hydrogen ions are translocated across the cytoplasmic membrane), and thus conserves the redox energy in a proton gradient. This chain is NADH-quinone oxidoreductase subunit A, found in Erwinia tasmaniensis (strain DSM 17950 / CFBP 7177 / CIP 109463 / NCPPB 4357 / Et1/99).